The primary structure comprises 637 residues: Interleukin-17 receptor E (637 aa).

The signal sequence occupies residues 1–23; the sequence is MGSPRLAALLLSLPLLLIGLAVS. The Extracellular segment spans residues 24-414; that stretch reads ARVACPCLRS…VLCPDVSHRH (391 aa). Positions 87–134 are disordered; sequence GSPSLSEESHRISIPSSAISHRGQRTKRAQPSAAEGREHLPEAGSQKC. Asn278 and Asn307 each carry an N-linked (GlcNAc...) asparagine glycan. A helical transmembrane segment spans residues 415 to 435; the sequence is LGLLILALLALTALVGVVLVL. At 436 to 637 the chain is on the cytoplasmic side; the sequence is LGRRLLPGSG…TNSPCGFSCL (202 aa). One can recognise an SEFIR domain in the interval 447 to 583; it reads TRPVLLLHAA…LLRDLPRLLR (137 aa).

Forms heterodimers with IL17RA; the heterodimer binds IL17C. Predominantly expressed in mucosal tissues, including trachea, lung, kidney and stomach. Highly expressed in colon epithelial cells. Also expressed in testis. Low expression, if any, in heart, liver, spleen, or brain. Among CD4 T-helper cells, expressed at high levels in Th17 cells.

The protein resides in the cell membrane. It is found in the secreted. Its subcellular location is the cytoplasm. In terms of biological role, specific functional receptor for IL17C, signaling through the NF-kappa-B and MAPK pathways. Requires TRAF3IP2 /ACT1 for signaling. Crucial regulator in innate immunity to bacterial pathogens, such as Citrobacter rodentium. Isoform 4 and isoform 5 may be either cytoplasmic inactive or dominant active forms. Isoform 2 and isoform 3 may act as soluble decoy receptors. The polypeptide is Interleukin-17 receptor E (Il17re) (Mus musculus (Mouse)).